The sequence spans 642 residues: MGKIIGIDLGTTNSCVAIMDGGKARVIENSEGDRTTPSIVAYTKDGEVLVGASAKRQAVTNPKNTFYAVKRLIGRKFTDGEVQKDISHVPYGILAHDNGDAWVQTSDSKRMAPQEISARVLEKMKKTAEDFLGEKVTEAVITVPAYFNDSQRQATKDAGRIAGLDVKRIINEPTAAALAYGLDKNGGDRKIAVYDLGGGTFDVSIIEIAEVDGEKQFEVLATNGDTFLGGEDFDNRVIEYLVDEFNKDQGIDLRKDPLALQRLKDAAERAKIELSTSQQTEVNLPYVTADASGPKHLNIKLTRAKLEALVEDLVKKSIEPCRTALNDAGLRASDINEVILVGGQTRMPKVQQAVADFFGKEPRKDVNPDEAVAVGAAIQGGVLAGDVKDVLLLDVTPLSLGIETMGGVFTKIIEKNTTIPTKASQTFSTAEDNQSAVTVHVLQGEREQARFNKSLAKFDLSGIEPAPRGMPQVEVSFDIDANGILHVSAKDKKTNKEQKVEIKAGSGLSDEEIQRMVADAEANREEDKKFQELVQTRNQADGLIHATRTAITEHGSKVGGDVIGKVEAALADLETAMKGDDKAQIEARSKTLEEAGQSLYAAAAAAEQGGNADAASGNAQASKAADDVVDAEFTEVKDDKKA.

Threonine 200 carries the phosphothreonine; by autocatalysis modification. Residues 603–623 show a composition bias toward low complexity; sequence AAAAEQGGNADAASGNAQASK. Positions 603–627 are disordered; the sequence is AAAAEQGGNADAASGNAQASKAADD.

It belongs to the heat shock protein 70 family.

Acts as a chaperone. In Xanthomonas campestris pv. campestris (strain B100), this protein is Chaperone protein DnaK.